The sequence spans 272 residues: Putative phosphoenolpyruvate synthase regulatory protein (272 aa).

151–158 (GVSRSGKT) is a binding site for ADP.

The protein belongs to the pyruvate, phosphate/water dikinase regulatory protein family. PSRP subfamily.

It carries out the reaction [pyruvate, water dikinase] + ADP = [pyruvate, water dikinase]-phosphate + AMP + H(+). The enzyme catalyses [pyruvate, water dikinase]-phosphate + phosphate + H(+) = [pyruvate, water dikinase] + diphosphate. Its function is as follows. Bifunctional serine/threonine kinase and phosphorylase involved in the regulation of the phosphoenolpyruvate synthase (PEPS) by catalyzing its phosphorylation/dephosphorylation. This Desulfotalea psychrophila (strain LSv54 / DSM 12343) protein is Putative phosphoenolpyruvate synthase regulatory protein.